Consider the following 105-residue polypeptide: Large ribosomal subunit protein uL24 (105 aa).

The protein belongs to the universal ribosomal protein uL24 family. Part of the 50S ribosomal subunit.

One of two assembly initiator proteins, it binds directly to the 5'-end of the 23S rRNA, where it nucleates assembly of the 50S subunit. Its function is as follows. One of the proteins that surrounds the polypeptide exit tunnel on the outside of the subunit. In Clostridium botulinum (strain 657 / Type Ba4), this protein is Large ribosomal subunit protein uL24.